The following is a 173-amino-acid chain: Protein tyrosine phosphatase type IVA 1 (173 aa).

One can recognise a Tyrosine-protein phosphatase domain in the interval 8 to 161; the sequence is APVEVTYKNM…YRPKMRLRFK (154 aa). Cysteines 49 and 104 form a disulfide. Aspartate 72 serves as the catalytic Proton donor. Residues 97 to 132 form an interaction with ATF5 region; the sequence is GCCIAVHCVAGLGRAPVLVALALIEGGMKYEDAVQF. Cysteine 104 (phosphocysteine intermediate) is an active-site residue. 105 to 110 contributes to the phosphate binding site; that stretch reads VAGLGR. Arginine 110 lines the substrate pocket. Cysteine 170 carries the cysteine methyl ester modification. Cysteine 170 carries S-farnesyl cysteine lipidation. Residues 171–173 constitute a propeptide, removed in mature form; sequence CIQ.

Belongs to the protein-tyrosine phosphatase family. As to quaternary structure, homotrimer. Interacts with ATF5. Interacts with tubulin. Post-translationally, farnesylated. Farnesylation is required for membrane targeting. Unfarnesylated forms are shifted into the nucleus. As to expression, expressed in bone marrow, lymph nodes, T lymphocytes, spleen, thymus and tonsil. Overexpressed in tumor cell lines.

The protein localises to the cell membrane. Its subcellular location is the early endosome. It localises to the endoplasmic reticulum. The protein resides in the cytoplasm. It is found in the cytoskeleton. The protein localises to the spindle. Its subcellular location is the nucleus. The catalysed reaction is O-phospho-L-tyrosyl-[protein] + H2O = L-tyrosyl-[protein] + phosphate. With respect to regulation, inhibited by sodium orthovanadate and pentamidine. Functionally, protein tyrosine phosphatase which stimulates progression from G1 into S phase during mitosis. May play a role in the development and maintenance of differentiating epithelial tissues. Enhances cell proliferation, cell motility and invasive activity, and promotes cancer metastasis. This is Protein tyrosine phosphatase type IVA 1 (PTP4A1) from Homo sapiens (Human).